We begin with the raw amino-acid sequence, 361 residues long: MSKRAFNFCAGPAALPEAVLLRAQAELLDWHGKGLSVMEMSHRSDEFVSIATKAEQDLRDLLSIPSNYKVLFLQGGASQQFAQIALNLLPENGKADYIDTGIWSQKAIDEASRYGAINVAASAKAYDYFAIPGQNEWKLSKDAAYVHYAPNETIGGLEFNWIPETGDVPLVADMSSDILSRPLDISRFGMIYAGAQKNIGPSGIVVVIIREDLLGRARSLCPTMLDYKVAADNGSMYNTPPTLAWYLSGLVFEWLKEQGGVEAIGKRNEIKQRTLYDFIDASELYSNPINKPDRSWMNVPFRLADDRLDKPFLAGADANGLLNLKGHRSVGGMRASIYNAIDINAINALVAYMKDFEKEHG.

Residue arginine 43 participates in L-glutamate binding. Pyridoxal 5'-phosphate-binding positions include 77-78 (AS), tryptophan 103, threonine 153, aspartate 173, and glutamine 196. The residue at position 197 (lysine 197) is an N6-(pyridoxal phosphate)lysine. Position 238–239 (238–239 (NT)) interacts with pyridoxal 5'-phosphate.

This sequence belongs to the class-V pyridoxal-phosphate-dependent aminotransferase family. SerC subfamily. As to quaternary structure, homodimer. Pyridoxal 5'-phosphate is required as a cofactor.

It is found in the cytoplasm. The enzyme catalyses O-phospho-L-serine + 2-oxoglutarate = 3-phosphooxypyruvate + L-glutamate. It catalyses the reaction 4-(phosphooxy)-L-threonine + 2-oxoglutarate = (R)-3-hydroxy-2-oxo-4-phosphooxybutanoate + L-glutamate. The protein operates within amino-acid biosynthesis; L-serine biosynthesis; L-serine from 3-phospho-D-glycerate: step 2/3. It participates in cofactor biosynthesis; pyridoxine 5'-phosphate biosynthesis; pyridoxine 5'-phosphate from D-erythrose 4-phosphate: step 3/5. In terms of biological role, catalyzes the reversible conversion of 3-phosphohydroxypyruvate to phosphoserine and of 3-hydroxy-2-oxo-4-phosphonooxybutanoate to phosphohydroxythreonine. This Pseudomonas syringae pv. syringae (strain B728a) protein is Phosphoserine aminotransferase.